Here is a 287-residue protein sequence, read N- to C-terminus: Bifunctional protein FolD (287 aa).

Residues 165–167 (NRS), serine 190, and isoleucine 233 contribute to the NADP(+) site.

Belongs to the tetrahydrofolate dehydrogenase/cyclohydrolase family. As to quaternary structure, homodimer.

It catalyses the reaction (6R)-5,10-methylene-5,6,7,8-tetrahydrofolate + NADP(+) = (6R)-5,10-methenyltetrahydrofolate + NADPH. The catalysed reaction is (6R)-5,10-methenyltetrahydrofolate + H2O = (6R)-10-formyltetrahydrofolate + H(+). It functions in the pathway one-carbon metabolism; tetrahydrofolate interconversion. Its function is as follows. Catalyzes the oxidation of 5,10-methylenetetrahydrofolate to 5,10-methenyltetrahydrofolate and then the hydrolysis of 5,10-methenyltetrahydrofolate to 10-formyltetrahydrofolate. This chain is Bifunctional protein FolD, found in Nitrosopumilus maritimus (strain SCM1).